Consider the following 520-residue polypeptide: Peptide chain release factor 3 (520 aa).

Residues 8–277 (ESRKTFAIIS…HAPMPNARQT (270 aa)) form the tr-type G domain. GTP contacts are provided by residues 17–24 (SHPDAGKT), 85–89 (DTPGH), and 139–142 (NKLD).

This sequence belongs to the TRAFAC class translation factor GTPase superfamily. Classic translation factor GTPase family. PrfC subfamily.

It localises to the cytoplasm. Functionally, increases the formation of ribosomal termination complexes and stimulates activities of RF-1 and RF-2. It binds guanine nucleotides and has strong preference for UGA stop codons. It may interact directly with the ribosome. The stimulation of RF-1 and RF-2 is significantly reduced by GTP and GDP, but not by GMP. The chain is Peptide chain release factor 3 from Staphylococcus saprophyticus subsp. saprophyticus (strain ATCC 15305 / DSM 20229 / NCIMB 8711 / NCTC 7292 / S-41).